The following is a 168-amino-acid chain: Protein-export protein SecB (168 aa).

The tract at residues 1–21 (MADQPSGNNDAKQAETNGNTV) is disordered.

This sequence belongs to the SecB family. Homotetramer, a dimer of dimers. One homotetramer interacts with 1 SecA dimer.

Its subcellular location is the cytoplasm. One of the proteins required for the normal export of preproteins out of the cell cytoplasm. It is a molecular chaperone that binds to a subset of precursor proteins, maintaining them in a translocation-competent state. It also specifically binds to its receptor SecA. The chain is Protein-export protein SecB from Chelativorans sp. (strain BNC1).